The sequence spans 126 residues: Large ribosomal subunit protein bL12 (126 aa).

It belongs to the bacterial ribosomal protein bL12 family. As to quaternary structure, homodimer. Part of the ribosomal stalk of the 50S ribosomal subunit. Forms a multimeric L10(L12)X complex, where L10 forms an elongated spine to which 2 to 4 L12 dimers bind in a sequential fashion. Binds GTP-bound translation factors.

Forms part of the ribosomal stalk which helps the ribosome interact with GTP-bound translation factors. Is thus essential for accurate translation. The chain is Large ribosomal subunit protein bL12 from Nitrosospira multiformis (strain ATCC 25196 / NCIMB 11849 / C 71).